Here is a 624-residue protein sequence, read N- to C-terminus: Diatom spindle kinesin-1 (624 aa).

A disordered region spans residues 1–59; it reads MNAANRRKSTSTVGITGRKDATRMKIEQMEKERKERRKTMMQRKEARKQEHMKNIEAGN. The globular stretch occupies residues 1 to 85; sequence MNAANRRKST…QENKIGDKSP (85 aa). Basic and acidic residues-rich tracts occupy residues 17-33 and 42-54; these read GRKD…EKER and QRKE…HMKN. One can recognise a Kinesin motor domain in the interval 95–411; the sequence is NICIAVRKRP…LRYADRIKEQ (317 aa). 186 to 193 provides a ligand contact to ATP; the sequence is GQTGSGKT. A coiled-coil region spans residues 426–624; it reads SNREIMPSKE…LARQVQLTQY (199 aa). The span at 478-511 shows a compositional bias: acidic residues; that stretch reads VDEEEADDEEGDYEEESEDLDYEDSEGQDYEEAV. The segment at 478 to 528 is disordered; the sequence is VDEEEADDEEGDYEEESEDLDYEDSEGQDYEEAVESQYDHSQEAQEGEEEL.

This sequence belongs to the TRAFAC class myosin-kinesin ATPase superfamily. Kinesin family. MCAK/KIF2 subfamily.

It localises to the cytoplasm. The protein resides in the cytoskeleton. In terms of biological role, involved in anaphase spindle elongation. The polypeptide is Diatom spindle kinesin-1 (DSK1) (Cylindrotheca fusiformis (Marine diatom)).